A 211-amino-acid chain; its full sequence is Large ribosomal subunit protein eL13 (211 aa).

It belongs to the eukaryotic ribosomal protein eL13 family. As to quaternary structure, component of the 60S large ribosomal subunit (LSU).

It is found in the cytoplasm. Its function is as follows. Component of the ribosome, a large ribonucleoprotein complex responsible for the synthesis of proteins in the cell. The small ribosomal subunit (SSU) binds messenger RNAs (mRNAs) and translates the encoded message by selecting cognate aminoacyl-transfer RNA (tRNA) molecules. The large subunit (LSU) contains the ribosomal catalytic site termed the peptidyl transferase center (PTC), which catalyzes the formation of peptide bonds, thereby polymerizing the amino acids delivered by tRNAs into a polypeptide chain. The nascent polypeptides leave the ribosome through a tunnel in the LSU and interact with protein factors that function in enzymatic processing, targeting, and the membrane insertion of nascent chains at the exit of the ribosomal tunnel. As part of the LSU, it is probably required for its formation and the maturation of rRNAs. The chain is Large ribosomal subunit protein eL13 (rpl13) from Ictalurus punctatus (Channel catfish).